Here is a 530-residue protein sequence, read N- to C-terminus: MQLTVWTYEGPPHVGAMRVATGMEGLHYVLHAPQGDTYADLLFTMIERRDRRPPVTYTTFAARDLGGDTAELFKTAVQNAYERFRPQAMIVGASCTGSLIQDDPGGLAKGMGLPVPVIAIDLPAYQRKENWGAAETFYQLVRALAGPSAPPPGSKRPERAPGVRPKCNILGPTALGFRHRDDVIEITALLGKLGIDVNVTAPMGATPADLTRLGEADFNVVLYPEIASQAASWLHRIFHQPFTKTIPIGVSATREFIEEVAALAGVDAAPVLKANSSRLTWFSHSVDSTYLTGKRVFIFGDATHVVAAARIASDEIGFKVVGIGTYSREFGREIREAAKLYDVEPLITDDYLEVEAHIAELQVELVLGTQMERHISKRLGVPCAVISAPVHIQDYPARYAPQMGFEGANVIFDTWVHPLMMGLEEHLLAMFKDDFEFKDGAVPSHLGVGHSAPAVQTASSEPQPSAIETPSAAATETAAVWAADAEKELRKIPFFVRGKARRNTERFANENGVATITVETLYDAKAHFSR.

Asp36 contributes to the [4Fe-4S] cluster binding site. Asp287 functions as the Proton donor in the catalytic mechanism. 422–423 (GL) provides a ligand contact to substrate. The interval 453-472 (PAVQTASSEPQPSAIETPSA) is disordered. The span at 454–463 (AVQTASSEPQ) shows a compositional bias: polar residues.

It belongs to the ChlB/BchB/BchZ family. In terms of assembly, protochlorophyllide reductase is composed of three subunits; BchL, BchN and BchB. Forms a heterotetramer of two BchB and two BchN subunits. Requires [4Fe-4S] cluster as cofactor.

It catalyses the reaction chlorophyllide a + oxidized 2[4Fe-4S]-[ferredoxin] + 2 ADP + 2 phosphate = protochlorophyllide a + reduced 2[4Fe-4S]-[ferredoxin] + 2 ATP + 2 H2O. It functions in the pathway porphyrin-containing compound metabolism; bacteriochlorophyll biosynthesis (light-independent). Functionally, component of the dark-operative protochlorophyllide reductase (DPOR) that uses Mg-ATP and reduced ferredoxin to reduce ring D of protochlorophyllide (Pchlide) to form chlorophyllide a (Chlide). This reaction is light-independent. The NB-protein (BchN-BchB) is the catalytic component of the complex. This chain is Light-independent protochlorophyllide reductase subunit B, found in Rhodopseudomonas palustris (strain BisB18).